The primary structure comprises 752 residues: Photosystem I P700 chlorophyll a apoprotein A1 (752 aa).

A run of 8 helical transmembrane segments spans residues 73 to 96, 159 to 182, 198 to 222, 294 to 312, 349 to 372, 388 to 414, 436 to 458, and 533 to 551; these read IFSA…FHGA, LYWI…FHYH, MNHH…HVAL, IAHH…GHMY, WHAQ…HHMY, LSLF…IFMV, SIIA…FYIH, and FMVH…LILL. Cys575 and Cys584 together coordinate [4Fe-4S] cluster. 2 helical membrane-spanning segments follow: residues 591–612 and 666–688; these read HVFL…HFSW and ASAY…MFLF. His677 contributes to the chlorophyll a' binding site. Chlorophyll a is bound by residues Met685 and Tyr693. Trp694 serves as a coordination point for phylloquinone. A helical transmembrane segment spans residues 726–746; the sequence is AVGLAHYLLGGIGTTWAFFLA.

This sequence belongs to the PsaA/PsaB family. In terms of assembly, the PsaA/B heterodimer binds the P700 chlorophyll special pair and subsequent electron acceptors. PSI consists of a core antenna complex that captures photons, and an electron transfer chain that converts photonic excitation into a charge separation. The eukaryotic PSI reaction center is composed of at least 11 subunits. It depends on P700 is a chlorophyll a/chlorophyll a' dimer, A0 is one or more chlorophyll a, A1 is one or both phylloquinones and FX is a shared 4Fe-4S iron-sulfur center. as a cofactor.

It is found in the plastid. The protein resides in the chloroplast thylakoid membrane. The enzyme catalyses reduced [plastocyanin] + hnu + oxidized [2Fe-2S]-[ferredoxin] = oxidized [plastocyanin] + reduced [2Fe-2S]-[ferredoxin]. In terms of biological role, psaA and PsaB bind P700, the primary electron donor of photosystem I (PSI), as well as the electron acceptors A0, A1 and FX. PSI is a plastocyanin/cytochrome c6-ferredoxin oxidoreductase, converting photonic excitation into a charge separation, which transfers an electron from the donor P700 chlorophyll pair to the spectroscopically characterized acceptors A0, A1, FX, FA and FB in turn. Oxidized P700 is reduced on the lumenal side of the thylakoid membrane by plastocyanin or cytochrome c6. The protein is Photosystem I P700 chlorophyll a apoprotein A1 of Phaeodactylum tricornutum (strain CCAP 1055/1).